Here is a 433-residue protein sequence, read N- to C-terminus: Glutamate-1-semialdehyde 2,1-aminomutase (433 aa).

Lys271 carries the N6-(pyridoxal phosphate)lysine modification.

This sequence belongs to the class-III pyridoxal-phosphate-dependent aminotransferase family. HemL subfamily. Homodimer. It depends on pyridoxal 5'-phosphate as a cofactor.

It localises to the cytoplasm. The enzyme catalyses (S)-4-amino-5-oxopentanoate = 5-aminolevulinate. It functions in the pathway porphyrin-containing compound metabolism; protoporphyrin-IX biosynthesis; 5-aminolevulinate from L-glutamyl-tRNA(Glu): step 2/2. The protein operates within porphyrin-containing compound metabolism; chlorophyll biosynthesis. In Prochlorococcus marinus (strain MIT 9515), this protein is Glutamate-1-semialdehyde 2,1-aminomutase.